Here is a 307-residue protein sequence, read N- to C-terminus: Ribosomal protein L11 methyltransferase (307 aa).

4 residues coordinate S-adenosyl-L-methionine: T156, G177, D199, and N243.

It belongs to the methyltransferase superfamily. PrmA family.

It localises to the cytoplasm. The enzyme catalyses L-lysyl-[protein] + 3 S-adenosyl-L-methionine = N(6),N(6),N(6)-trimethyl-L-lysyl-[protein] + 3 S-adenosyl-L-homocysteine + 3 H(+). In terms of biological role, methylates ribosomal protein L11. This is Ribosomal protein L11 methyltransferase from Syntrophomonas wolfei subsp. wolfei (strain DSM 2245B / Goettingen).